Consider the following 292-residue polypeptide: 4-hydroxy-tetrahydrodipicolinate synthase (292 aa).

T45 is a pyruvate binding site. Catalysis depends on Y133, which acts as the Proton donor/acceptor. K161 acts as the Schiff-base intermediate with substrate in catalysis. Residue I203 participates in pyruvate binding.

Belongs to the DapA family. As to quaternary structure, homotetramer; dimer of dimers.

It localises to the cytoplasm. The catalysed reaction is L-aspartate 4-semialdehyde + pyruvate = (2S,4S)-4-hydroxy-2,3,4,5-tetrahydrodipicolinate + H2O + H(+). The protein operates within amino-acid biosynthesis; L-lysine biosynthesis via DAP pathway; (S)-tetrahydrodipicolinate from L-aspartate: step 3/4. In terms of biological role, catalyzes the condensation of (S)-aspartate-beta-semialdehyde [(S)-ASA] and pyruvate to 4-hydroxy-tetrahydrodipicolinate (HTPA). The sequence is that of 4-hydroxy-tetrahydrodipicolinate synthase from Herminiimonas arsenicoxydans.